A 165-amino-acid polypeptide reads, in one-letter code: Deoxyuridine 5'-triphosphate nucleotidohydrolase (165 aa).

This sequence belongs to the dUTPase family. In terms of assembly, homotrimer. It depends on Mg(2+) as a cofactor.

It localises to the host cytoplasm. It is found in the virion. It carries out the reaction dUTP + H2O = dUMP + diphosphate + H(+). In terms of biological role, the viral dUTPase may play a role in lowering the dUTP concentration in natural infections to minimize misincorporation of deoxyuridine into the viral DNA and ensure the fidelity of genome replication. In Ornithodoros (relapsing fever ticks), this protein is Deoxyuridine 5'-triphosphate nucleotidohydrolase.